The chain runs to 77 residues: Defensin-like protein 91 (77 aa).

The first 27 residues, 1 to 27 (METKKISYFLLPSLMIVALIFQPMCSA), serve as a signal peptide directing secretion. Disulfide bonds link cysteine 38–cysteine 75, cysteine 43–cysteine 64, cysteine 49–cysteine 73, and cysteine 53–cysteine 74.

This sequence belongs to the DEFL family.

It localises to the secreted. This Arabidopsis thaliana (Mouse-ear cress) protein is Defensin-like protein 91 (LCR47).